The chain runs to 206 residues: Urease accessory protein UreG (206 aa).

A GTP-binding site is contributed by 14-21 (GPVGSGKT).

Belongs to the SIMIBI class G3E GTPase family. UreG subfamily. Homodimer. UreD, UreF and UreG form a complex that acts as a GTP-hydrolysis-dependent molecular chaperone, activating the urease apoprotein by helping to assemble the nickel containing metallocenter of UreC. The UreE protein probably delivers the nickel.

It is found in the cytoplasm. Its function is as follows. Facilitates the functional incorporation of the urease nickel metallocenter. This process requires GTP hydrolysis, probably effectuated by UreG. The polypeptide is Urease accessory protein UreG (Brucella anthropi (strain ATCC 49188 / DSM 6882 / CCUG 24695 / JCM 21032 / LMG 3331 / NBRC 15819 / NCTC 12168 / Alc 37) (Ochrobactrum anthropi)).